The primary structure comprises 171 residues: UPF0303 protein YPN_2129 (171 aa).

It belongs to the UPF0303 family.

The protein is UPF0303 protein YPN_2129 of Yersinia pestis bv. Antiqua (strain Nepal516).